A 478-amino-acid chain; its full sequence is MKIWLSGIYEFFLRYKNIWVEVWKIRKELDHPNRKKDESEFLPAHLELIETPVSKKPRLIAYLIMLFLAVAIVLASVSKVEIVATAPGKLTFSGRSKEIKPIENTIVQEIFVKDGQFVEKGQLLVSLTALGSDADIKKTITSLSLAKLENYRYQTLLTAIEKESLPVIDLSNTEFKDSSEEDRLRIKHLIEEQYTTWQKQKTQKTLAYKRKDAEKQTISAYVRKYEGATRIEQEKLKDFRKLYQQKSLSKHELLSQENKAIEAQNELAVYRSKLNELESDLLNVKEELELITQFFKSDVLEKLKQHIENERQLQLELEKNNQRRQASMIRAPVSGTVQQLKIHTIGGVVTTAETLMIIVPEDDVLEATALIQNKDIGFVAAGQEVIIKVETFPYTRYGYITGRIKHISPDAIEQPNLGLVFNATVSIDKQALSSPDGHKIELGLGMTITAEIKTGERSVMSYLLSPLEESVTESLRER.

Over 1–77 (MKIWLSGIYE…LAVAIVLASV (77 aa)) the chain is Cytoplasmic. A helical transmembrane segment spans residues 78-98 (SKVEIVATAPGKLTFSGRSKE). The Periplasmic segment spans residues 99-478 (IKPIENTIVQ…ESVTESLRER (380 aa)).

The protein belongs to the membrane fusion protein (MFP) (TC 8.A.1) family.

The protein resides in the cell inner membrane. In terms of biological role, involved in the transport of the Leukotoxin. The sequence is that of Leukotoxin secretion protein D (lktD) from Pasteurella haemolytica-like sp. (strain 5943B).